Reading from the N-terminus, the 582-residue chain is Ubiquilin-1 (582 aa).

Disordered stretches follow at residues 1–26 (MAES…AEPK) and 102–136 (RPQD…AANS). Position 2 is an N-acetylalanine (Ala2). The region spanning 28-102 (MKVTVKTPKE…VHLVIKTQNR (75 aa)) is the Ubiquitin-like domain. Over residues 102–135 (RPQDNSAQQTNTTGNSVTSSPAPDSNPTSGPAAN) the composition is skewed to polar residues. The tract at residues 169 to 422 (QLLSNPEMMV…LNNPLFAGNP (254 aa)) is interaction with UBXN4. STI1 domains are found at residues 173-201 (NPEM…QLIM) and 203-242 (NPQM…MQEM). Residues 285-365 (NPFASLVSSP…NLVPGAGASM (81 aa)) are disordered. The segment covering 290 to 304 (LVSSPSSAEGTQPSR) has biased composition (polar residues). Residues 318–346 (QTPQSSPASGSTGSTTNTVSTSAGNATST) are compositionally biased toward low complexity. STI1 domains follow at residues 381-428 (NPQL…QEQM) and 432-464 (LPTF…QQGL). Residues 481–513 (GLAAGNSGGPAGTTAPSTAPGEDTNPQGGAAEP) form a disordered region. Positions 539 to 579 (RFQQQLEQLSAMGFLNREANLQALIATGGDINAAIERLLGS) constitute a UBA domain.

In terms of assembly, monomer and homodimer. Heterodimer with UBQLN2. Binds CD47. Binds NBL1. Binds GABRA1, GABRA2, GABRA3, GABRA6, GABRB1, GABRB2 and GABRB3. Binds UBE3A, BTRC, P4HB and MTOR. Interacts with the proteasome 19S subunit. Interacts (via ubiquitin-like domain) with TREX1; the interaction is direct and may control TREX1 subcellular location. Forms a complex with UBXN4 and VCP. Interacts (via UBA domain) with UBQLN4 (via ubiquitin-like domain). Found in a complex with UBQLN2 and MAP1LC3A/B/C. The monomeric form interacts with PSEN1 and PSEN2. Interacts with ORAI1. Interacts (via UBA domain) with TICAM1. Interacts with EPS15. Interacts (via UBA domain) with UBA52 and (via ubiquitin-like domain) with PSMD3 and PSMD4. Interacts with HERPUD1. Interacts with MAP1LC3A/B/C in the presence of UBQLN4. Interacts (via ubiquitin-like domain) with EPS15 (via UIM domains) and both the ubiquitinated and non-ubiquitinated forms can interact with EPS15. Interacts (via ubiquitin-like domain) with EPS15L1, HGS (via UIM domain) and STAM2 (via UIM domain). Interacts with BCL2L10/BCL-B; in the cytoplasm. In terms of processing, degraded during both macroautophagy and during chaperone-mediated autophagy (CMA). Post-translationally, phosphorylated. Ubiquitinated.

Its subcellular location is the nucleus. It localises to the cytoplasm. The protein localises to the endoplasmic reticulum. It is found in the cytoplasmic vesicle. The protein resides in the autophagosome. Its subcellular location is the cell membrane. Plays an important role in the regulation of different protein degradation mechanisms and pathways including ubiquitin-proteasome system (UPS), autophagy and endoplasmic reticulum-associated protein degradation (ERAD) pathway. Mediates the proteasomal targeting of misfolded or accumulated proteins for degradation by binding (via UBA domain) to their polyubiquitin chains and by interacting (via ubiquitin-like domain) with the subunits of the proteasome. Plays a role in the ERAD pathway via its interaction with ER-localized proteins UBXN4, VCP and HERPUD1 and may form a link between the polyubiquitinated ERAD substrates and the proteasome. Plays a role in unfolded protein response (UPR) by attenuating the induction of UPR-inducible genes, DDTI3/CHOP, HSPA5 and PDIA2 during ER stress. Involved in the regulation of macroautophagy and autophagosome formation; required for maturation of autophagy-related protein LC3 from the cytosolic form LC3-I to the membrane-bound form LC3-II and may assist in the maturation of autophagosomes to autolysosomes by mediating autophagosome-lysosome fusion. Negatively regulates the TICAM1/TRIF-dependent toll-like receptor signaling pathway by decreasing the abundance of TICAM1 via the autophagic pathway. Promotes the ubiquitination and lysosomal degradation of ORAI1, consequently down-regulating the ORAI1-mediated Ca2+ mobilization. Suppresses the maturation and proteasomal degradation of amyloid beta A4 protein (A4) by stimulating the lysine 63 (K63)-linked polyubiquitination. Delays the maturation of A4 by sequestering it in the Golgi apparatus and preventing its transport to the cell surface for subsequent processing. Promotes the surface expression of GABA-A receptors. Ubiquitinates BCL2L10 and thereby stabilizes protein abundance. The chain is Ubiquilin-1 (Ubqln1) from Rattus norvegicus (Rat).